Consider the following 851-residue polypeptide: Putative cell signaling protein (851 aa).

Basic and acidic residues-rich tracts occupy residues 165–176 (KLNEQDGKKSDN), 196–223 (DQAR…EETK), and 767–781 (SEER…LSHD). Disordered stretches follow at residues 165-223 (KLNE…EETK) and 714-781 (DDSE…LSHD).

Palmitoylated.

This Schizosaccharomyces pombe (strain 972 / ATCC 24843) (Fission yeast) protein is Putative cell signaling protein.